A 194-amino-acid polypeptide reads, in one-letter code: GTP cyclohydrolase-2 (194 aa).

A GTP-binding site is contributed by 50–54 (RIHSE). Residues Cys-55, Cys-66, and Cys-68 each contribute to the Zn(2+) site. GTP-binding positions include 94–96 (EGR) and Thr-116. Catalysis depends on Asp-128, which acts as the Proton acceptor. Arg-130 acts as the Nucleophile in catalysis. GTP is bound by residues Thr-151 and Lys-156.

Belongs to the GTP cyclohydrolase II family. The cofactor is Zn(2+).

It catalyses the reaction GTP + 4 H2O = 2,5-diamino-6-hydroxy-4-(5-phosphoribosylamino)-pyrimidine + formate + 2 phosphate + 3 H(+). The protein operates within cofactor biosynthesis; riboflavin biosynthesis; 5-amino-6-(D-ribitylamino)uracil from GTP: step 1/4. Functionally, catalyzes the conversion of GTP to 2,5-diamino-6-ribosylamino-4(3H)-pyrimidinone 5'-phosphate (DARP), formate and pyrophosphate. This Helicobacter hepaticus (strain ATCC 51449 / 3B1) protein is GTP cyclohydrolase-2.